Consider the following 569-residue polypeptide: Formate--tetrahydrofolate ligase (569 aa).

64–71 (TPHGEGKT) lines the ATP pocket.

This sequence belongs to the formate--tetrahydrofolate ligase family.

The catalysed reaction is (6S)-5,6,7,8-tetrahydrofolate + formate + ATP = (6R)-10-formyltetrahydrofolate + ADP + phosphate. It participates in one-carbon metabolism; tetrahydrofolate interconversion. In Shewanella sp. (strain MR-7), this protein is Formate--tetrahydrofolate ligase.